A 239-amino-acid polypeptide reads, in one-letter code: Flagellin B3 (239 aa).

The propeptide occupies 1–11 (MLKNFMKNKKG). 2 N-linked (GlcNAc...) asparagine glycosylation sites follow: N115 and N128.

The protein belongs to the archaeal flagellin family. Post-translationally, N-linked glycans consist of the 779 Da trisaccharide beta-ManNAc(Thr)-(1-4)-beta-GlcNAc3NAcA-(1-3)-beta-GlcNAc.

The protein localises to the archaeal flagellum. Its function is as follows. Flagellin is the subunit protein which polymerizes to form the filaments of archaeal flagella. This chain is Flagellin B3 (flaB3), found in Methanococcus voltae.